The sequence spans 170 residues: Photosystem II extrinsic protein V (170 aa).

Positions 1–33 are cleaved as a signal peptide; it reads MASLFASLGRSLIKLLIVLPVIIGLSISSPAMA. 4 residues coordinate heme c: Cys-70, Cys-73, His-74, and His-125.

Belongs to the cytochrome c family. PsbV subfamily. PSII is composed of 1 copy each of membrane proteins PsbA, PsbB, PsbC, PsbD, PsbE, PsbF, PsbH, PsbI, PsbJ, PsbK, PsbL, PsbM, PsbT, PsbX, PsbY, Psb30/Ycf12, peripheral proteins PsbO, CyanoQ (PsbQ), PsbU, PsbV and a large number of cofactors. It forms dimeric complexes. Heme c is required as a cofactor.

It is found in the cellular thylakoid membrane. In terms of biological role, one of the extrinsic, lumenal subunits of photosystem II (PSII). PSII is a light-driven water plastoquinone oxidoreductase, using light energy to abstract electrons from H(2)O, generating a proton gradient subsequently used for ATP formation. The extrinsic proteins stabilize the structure of photosystem II oxygen-evolving complex (OEC), the ion environment of oxygen evolution and protect the OEC against heat-induced inactivation. Low-potential cytochrome c that plays a role in the OEC of PSII. In Prochlorococcus marinus (strain MIT 9303), this protein is Photosystem II extrinsic protein V.